An 89-amino-acid polypeptide reads, in one-letter code: Small ribosomal subunit protein uS14 (89 aa).

Belongs to the universal ribosomal protein uS14 family. Part of the 30S ribosomal subunit. Contacts proteins S3 and S10.

Functionally, binds 16S rRNA, required for the assembly of 30S particles and may also be responsible for determining the conformation of the 16S rRNA at the A site. The protein is Small ribosomal subunit protein uS14 of Leuconostoc citreum (strain KM20).